The sequence spans 272 residues: Energy-coupling factor transporter ATP-binding protein EcfA1 (272 aa).

The region spanning 5-239 (IKIDNLKYSY…RKALHENGLE (235 aa)) is the ABC transporter domain. Residue 37 to 44 (GHNGSGKS) coordinates ATP. E163 serves as the catalytic Proton acceptor.

Belongs to the ABC transporter superfamily. Energy-coupling factor EcfA family. Forms a stable energy-coupling factor (ECF) transporter complex probably composed of 2 membrane-embedded substrate-binding proteins (S component), 2 ATP-binding proteins (A component) and 2 transmembrane proteins (T component). This complex interacts with a number of substrate-specific components, including FolT, PanT and RibU for 5-formyltetrahydrofolate, pantothenate and riboflavin respectively.

It is found in the cell membrane. ATP-binding (A) component of a common energy-coupling factor (ECF) ABC-transporter complex. Unlike classic ABC transporters this ECF transporter provides the energy necessary to transport a number of different substrates including 5-formyltetrahydrofolate, pantothenate and riboflavin. Expression of the complex plus FolT in E.coli allows 5-formyltetrahydrofolate uptake; 5-formyltetrahydrofolate is not taken up in the absence of FolT or the EcfA1A2T complex. The chain is Energy-coupling factor transporter ATP-binding protein EcfA1 from Leuconostoc mesenteroides subsp. mesenteroides (strain ATCC 8293 / DSM 20343 / BCRC 11652 / CCM 1803 / JCM 6124 / NCDO 523 / NBRC 100496 / NCIMB 8023 / NCTC 12954 / NRRL B-1118 / 37Y).